Reading from the N-terminus, the 157-residue chain is Endoribonuclease YbeY (157 aa).

Zn(2+) contacts are provided by H114, H118, and H124.

This sequence belongs to the endoribonuclease YbeY family. The cofactor is Zn(2+).

The protein localises to the cytoplasm. Single strand-specific metallo-endoribonuclease involved in late-stage 70S ribosome quality control and in maturation of the 3' terminus of the 16S rRNA. The chain is Endoribonuclease YbeY from Salmonella agona (strain SL483).